A 347-amino-acid polypeptide reads, in one-letter code: MKDENSISFLSSNENYLYDKSENELRPKVFEDFKGQVNVKETLSIFIRASKERDEALDHVFLSGPPGLGKTTLASIIAFEMNASIKITSAPAFDKPKDIIGILTGLDEKSVLFIDEIHRLRPIIEEMLCIAMEDYELDWVIGQGANARTVRMPLPKFTLIGATTKPGKVTSPLYARFGITARFELYSEIELVEIIKRNSLILNIEIEEDAAFLLARSSRGTPRIANRLLRRIRDIAQVTGSLVITSDIVSIGLEMLRIDGEGLDEQDRNILRSLILKFNGGPVGVDTLAISVGETADSLEDFYEPYLIMKGFISRTHRGRKATEFAYLHLNLEMKEDGLNENQRVSF.

The large ATPase domain (RuvB-L) stretch occupies residues 1–186 (MKDENSISFL…FGITARFELY (186 aa)). Residues Leu-25, Arg-26, Gly-67, Lys-70, Thr-71, Thr-72, 133–135 (EDY), Arg-176, Tyr-186, and Arg-223 each bind ATP. Thr-71 lines the Mg(2+) pocket. Residues 187-257 (SEIELVEIIK…IVSIGLEMLR (71 aa)) are small ATPAse domain (RuvB-S). The head domain (RuvB-H) stretch occupies residues 260-347 (GEGLDEQDRN…GLNENQRVSF (88 aa)). DNA is bound by residues Arg-315 and Arg-320.

This sequence belongs to the RuvB family. As to quaternary structure, homohexamer. Forms an RuvA(8)-RuvB(12)-Holliday junction (HJ) complex. HJ DNA is sandwiched between 2 RuvA tetramers; dsDNA enters through RuvA and exits via RuvB. An RuvB hexamer assembles on each DNA strand where it exits the tetramer. Each RuvB hexamer is contacted by two RuvA subunits (via domain III) on 2 adjacent RuvB subunits; this complex drives branch migration. In the full resolvosome a probable DNA-RuvA(4)-RuvB(12)-RuvC(2) complex forms which resolves the HJ.

The protein resides in the cytoplasm. It catalyses the reaction ATP + H2O = ADP + phosphate + H(+). Functionally, the RuvA-RuvB-RuvC complex processes Holliday junction (HJ) DNA during genetic recombination and DNA repair, while the RuvA-RuvB complex plays an important role in the rescue of blocked DNA replication forks via replication fork reversal (RFR). RuvA specifically binds to HJ cruciform DNA, conferring on it an open structure. The RuvB hexamer acts as an ATP-dependent pump, pulling dsDNA into and through the RuvAB complex. RuvB forms 2 homohexamers on either side of HJ DNA bound by 1 or 2 RuvA tetramers; 4 subunits per hexamer contact DNA at a time. Coordinated motions by a converter formed by DNA-disengaged RuvB subunits stimulates ATP hydrolysis and nucleotide exchange. Immobilization of the converter enables RuvB to convert the ATP-contained energy into a lever motion, pulling 2 nucleotides of DNA out of the RuvA tetramer per ATP hydrolyzed, thus driving DNA branch migration. The RuvB motors rotate together with the DNA substrate, which together with the progressing nucleotide cycle form the mechanistic basis for DNA recombination by continuous HJ branch migration. Branch migration allows RuvC to scan DNA until it finds its consensus sequence, where it cleaves and resolves cruciform DNA. The polypeptide is Holliday junction branch migration complex subunit RuvB (Borreliella burgdorferi (strain ATCC 35210 / DSM 4680 / CIP 102532 / B31) (Borrelia burgdorferi)).